The sequence spans 84 residues: Small ribosomal subunit protein bS18 (84 aa).

This sequence belongs to the bacterial ribosomal protein bS18 family. As to quaternary structure, part of the 30S ribosomal subunit. Forms a tight heterodimer with protein bS6.

Binds as a heterodimer with protein bS6 to the central domain of the 16S rRNA, where it helps stabilize the platform of the 30S subunit. In Mycobacterium leprae (strain Br4923), this protein is Small ribosomal subunit protein bS18.